Consider the following 188-residue polypeptide: Elongation factor P (188 aa).

It belongs to the elongation factor P family.

The protein resides in the cytoplasm. Its pathway is protein biosynthesis; polypeptide chain elongation. In terms of biological role, involved in peptide bond synthesis. Stimulates efficient translation and peptide-bond synthesis on native or reconstituted 70S ribosomes in vitro. Probably functions indirectly by altering the affinity of the ribosome for aminoacyl-tRNA, thus increasing their reactivity as acceptors for peptidyl transferase. In Stutzerimonas stutzeri (strain A1501) (Pseudomonas stutzeri), this protein is Elongation factor P.